A 335-amino-acid polypeptide reads, in one-letter code: Eukaryotic translation initiation factor 3 subunit I (335 aa).

5 WD repeats span residues 8 to 47 (GHER…RLGT), 50 to 91 (GHQG…KVWD), 145 to 184 (CTES…QLEN), 189 to 228 (EFDN…ILKT), and 286 to 325 (GHFG…FDFM).

This sequence belongs to the eIF-3 subunit I family. Component of the eukaryotic translation initiation factor 3 (eIF-3) complex.

It localises to the cytoplasm. Component of the eukaryotic translation initiation factor 3 (eIF-3) complex, which is involved in protein synthesis of a specialized repertoire of mRNAs and, together with other initiation factors, stimulates binding of mRNA and methionyl-tRNAi to the 40S ribosome. The eIF-3 complex specifically targets and initiates translation of a subset of mRNAs involved in cell proliferation. The protein is Eukaryotic translation initiation factor 3 subunit I (tif34) of Aspergillus oryzae (strain ATCC 42149 / RIB 40) (Yellow koji mold).